The chain runs to 290 residues: Acetyl-coenzyme A carboxylase carboxyl transferase subunit beta (290 aa).

The CoA carboxyltransferase N-terminal domain occupies 29–290 (LWGKCPECSQ…RLHGYREKRK (262 aa)). Zn(2+) is bound by residues Cys-33, Cys-36, Cys-52, and Cys-55. The segment at 33–55 (CPECSQVVYRKDLLENANVCSNC) adopts a C4-type zinc-finger fold.

This sequence belongs to the AccD/PCCB family. As to quaternary structure, acetyl-CoA carboxylase is a heterohexamer composed of biotin carboxyl carrier protein (AccB), biotin carboxylase (AccC) and two subunits each of ACCase subunit alpha (AccA) and ACCase subunit beta (AccD). It depends on Zn(2+) as a cofactor.

It localises to the cytoplasm. The catalysed reaction is N(6)-carboxybiotinyl-L-lysyl-[protein] + acetyl-CoA = N(6)-biotinyl-L-lysyl-[protein] + malonyl-CoA. Its pathway is lipid metabolism; malonyl-CoA biosynthesis; malonyl-CoA from acetyl-CoA: step 1/1. In terms of biological role, component of the acetyl coenzyme A carboxylase (ACC) complex. Biotin carboxylase (BC) catalyzes the carboxylation of biotin on its carrier protein (BCCP) and then the CO(2) group is transferred by the transcarboxylase to acetyl-CoA to form malonyl-CoA. The sequence is that of Acetyl-coenzyme A carboxylase carboxyl transferase subunit beta from Prochlorococcus marinus (strain MIT 9211).